Here is a 188-residue protein sequence, read N- to C-terminus: Elongation factor P (188 aa).

The protein belongs to the elongation factor P family.

It localises to the cytoplasm. The protein operates within protein biosynthesis; polypeptide chain elongation. Involved in peptide bond synthesis. Stimulates efficient translation and peptide-bond synthesis on native or reconstituted 70S ribosomes in vitro. Probably functions indirectly by altering the affinity of the ribosome for aminoacyl-tRNA, thus increasing their reactivity as acceptors for peptidyl transferase. The protein is Elongation factor P of Anaplasma phagocytophilum (strain HZ).